Reading from the N-terminus, the 351-residue chain is Prostaglandin reductase 2 (351 aa).

A substrate-binding site is contributed by 99 to 100; the sequence is FY. NADP(+) is bound by residues 165–168, Lys-192, Tyr-208, Asn-231, 253–259, 287–289, and Asn-337; these read GACG, CGQISQY, and FLV. 288 to 290 contacts substrate; sequence LVL.

The protein belongs to the NADP-dependent oxidoreductase L4BD family. As to quaternary structure, monomer. In terms of tissue distribution, widely expressed.

It localises to the cytoplasm. The enzyme catalyses 13,14-dihydro-15-oxo-prostaglandin E2 + NAD(+) = 15-oxoprostaglandin E2 + NADH + H(+). It carries out the reaction 13,14-dihydro-15-oxo-prostaglandin E2 + NADP(+) = 15-oxoprostaglandin E2 + NADPH + H(+). It catalyses the reaction 13,14-dihydro-15-oxo-PGF2alpha + NADP(+) = 15-oxoprostaglandin F2alpha + NADPH + H(+). The catalysed reaction is 13,14-dihydro-15-oxo-prostaglandin E1 + NADP(+) = 15-oxoprostaglandin E1 + NADPH + H(+). The enzyme catalyses 13,14-dihydro-15-oxo-prostaglandin F1alpha + NADP(+) = 15-oxoprostaglandin F1alpha + NADPH + H(+). Functions as 15-oxo-prostaglandin 13-reductase and acts on 15-keto-PGE1, 15-keto-PGE2, 15-keto-PGE1-alpha and 15-keto-PGE2-alpha with highest activity towards 15-keto-PGE2. Overexpression represses transcriptional activity of PPARG and inhibits adipocyte differentiation. This is Prostaglandin reductase 2 from Homo sapiens (Human).